The primary structure comprises 264 residues: NAD kinase 1 (264 aa).

The active-site Proton acceptor is D45. NAD(+) contacts are provided by residues 45–46 (DG), 122–123 (NE), R148, D150, 161–166 (TAYNKS), and A185.

It belongs to the NAD kinase family. A divalent metal cation serves as cofactor.

Its subcellular location is the cytoplasm. It carries out the reaction NAD(+) + ATP = ADP + NADP(+) + H(+). Its function is as follows. Involved in the regulation of the intracellular balance of NAD and NADP, and is a key enzyme in the biosynthesis of NADP. Catalyzes specifically the phosphorylation on 2'-hydroxyl of the adenosine moiety of NAD to yield NADP. The chain is NAD kinase 1 from Listeria monocytogenes serotype 4b (strain F2365).